The chain runs to 203 residues: Small ribosomal subunit protein uS4 (203 aa).

One can recognise an S4 RNA-binding domain in the interval 93-153; that stretch reads RRLDNIVYRL…DKSKNLQQVK (61 aa).

The protein belongs to the universal ribosomal protein uS4 family. Part of the 30S ribosomal subunit. Contacts protein S5. The interaction surface between S4 and S5 is involved in control of translational fidelity.

One of the primary rRNA binding proteins, it binds directly to 16S rRNA where it nucleates assembly of the body of the 30S subunit. Functionally, with S5 and S12 plays an important role in translational accuracy. The protein is Small ribosomal subunit protein uS4 of Lactobacillus gasseri (strain ATCC 33323 / DSM 20243 / BCRC 14619 / CIP 102991 / JCM 1131 / KCTC 3163 / NCIMB 11718 / NCTC 13722 / AM63).